The primary structure comprises 109 residues: Ig kappa chain V region S211 (109 aa).

The tract at residues 1–23 (DVQMTQSPSYLAASPGESVSISC) is framework-1. The interval 24 to 35 (KASNKSISNNLA) is complementarity-determining-1. A framework-2 region spans residues 36–50 (WYZZKPGKANKLLIS). Residues 51 to 57 (SGSTLQS) form a complementarity-determining-2 region. The framework-3 stretch occupies residues 58–89 (GTPSRFSGSGSDTDFTLTIRSLEFQDFAVYYC). The complementarity-determining-3 stretch occupies residues 90–98 (ZZYNEPYYT). The tract at residues 99 to 108 (FGAGTMLELK) is framework-4.

The chain is Ig kappa chain V region S211 from Rattus norvegicus (Rat).